An 832-amino-acid chain; its full sequence is Leucine--tRNA ligase (832 aa).

A 'HIGH' region motif is present at residues P58–H68. The 'KMSKS' region motif lies at A598–S602. Residue K601 coordinates ATP.

Belongs to the class-I aminoacyl-tRNA synthetase family.

The protein localises to the cytoplasm. The catalysed reaction is tRNA(Leu) + L-leucine + ATP = L-leucyl-tRNA(Leu) + AMP + diphosphate. The protein is Leucine--tRNA ligase of Acidothermus cellulolyticus (strain ATCC 43068 / DSM 8971 / 11B).